Here is a 412-residue protein sequence, read N- to C-terminus: Serine hydroxymethyltransferase (412 aa).

(6S)-5,6,7,8-tetrahydrofolate contacts are provided by residues L117 and 121-123 (GHL). N6-(pyridoxal phosphate)lysine is present on K226. E241 contributes to the (6S)-5,6,7,8-tetrahydrofolate binding site.

This sequence belongs to the SHMT family. Homodimer. The cofactor is pyridoxal 5'-phosphate.

The protein localises to the cytoplasm. The enzyme catalyses (6R)-5,10-methylene-5,6,7,8-tetrahydrofolate + glycine + H2O = (6S)-5,6,7,8-tetrahydrofolate + L-serine. It participates in one-carbon metabolism; tetrahydrofolate interconversion. Its pathway is amino-acid biosynthesis; glycine biosynthesis; glycine from L-serine: step 1/1. In terms of biological role, catalyzes the reversible interconversion of serine and glycine with tetrahydrofolate (THF) serving as the one-carbon carrier. This reaction serves as the major source of one-carbon groups required for the biosynthesis of purines, thymidylate, methionine, and other important biomolecules. Also exhibits THF-independent aldolase activity toward beta-hydroxyamino acids, producing glycine and aldehydes, via a retro-aldol mechanism. This Staphylococcus carnosus (strain TM300) protein is Serine hydroxymethyltransferase.